Here is a 415-residue protein sequence, read N- to C-terminus: Lipoyl synthase, mitochondrial (415 aa).

A mitochondrion-targeting transit peptide spans 1–32 (MAVSTSHFRSLCASSRSLSRTGIVAPISCRGY). The disordered stretch occupies residues 30 to 50 (RGYATTEPSPSATSTTTTTTA). Over residues 33–49 (ATTEPSPSATSTTTTTT) the composition is skewed to low complexity. [4Fe-4S] cluster is bound by residues Cys132, Cys137, Cys143, Cys163, Cys167, Cys170, and Ser378. One can recognise a Radical SAM core domain in the interval 146-367 (GSDKSAATAT…RQRALDMGFL (222 aa)).

The protein belongs to the radical SAM superfamily. Lipoyl synthase family. [4Fe-4S] cluster is required as a cofactor.

It is found in the mitochondrion. It catalyses the reaction [[Fe-S] cluster scaffold protein carrying a second [4Fe-4S](2+) cluster] + N(6)-octanoyl-L-lysyl-[protein] + 2 oxidized [2Fe-2S]-[ferredoxin] + 2 S-adenosyl-L-methionine + 4 H(+) = [[Fe-S] cluster scaffold protein] + N(6)-[(R)-dihydrolipoyl]-L-lysyl-[protein] + 4 Fe(3+) + 2 hydrogen sulfide + 2 5'-deoxyadenosine + 2 L-methionine + 2 reduced [2Fe-2S]-[ferredoxin]. Its pathway is protein modification; protein lipoylation via endogenous pathway; protein N(6)-(lipoyl)lysine from octanoyl-[acyl-carrier-protein]: step 2/2. Catalyzes the radical-mediated insertion of two sulfur atoms into the C-6 and C-8 positions of the octanoyl moiety bound to the lipoyl domains of lipoate-dependent enzymes, thereby converting the octanoylated domains into lipoylated derivatives. This chain is Lipoyl synthase, mitochondrial, found in Neosartorya fischeri (strain ATCC 1020 / DSM 3700 / CBS 544.65 / FGSC A1164 / JCM 1740 / NRRL 181 / WB 181) (Aspergillus fischerianus).